A 455-amino-acid polypeptide reads, in one-letter code: GTPase Der (455 aa).

EngA-type G domains lie at 4–169 (PIVA…PKDQ) and 178–355 (LRVS…GQHQ). Residues 10-17 (GRPNVGKS), 57-61 (DTGGL), 120-123 (NKLE), 184-191 (GRPNVGKS), 233-237 (DTAGI), and 298-301 (NKWD) each bind GTP. The KH-like domain maps to 356 to 441 (RRVSTSVLNE…PVRFIFRGKP (86 aa)).

It belongs to the TRAFAC class TrmE-Era-EngA-EngB-Septin-like GTPase superfamily. EngA (Der) GTPase family. As to quaternary structure, associates with the 50S ribosomal subunit.

In terms of biological role, GTPase that plays an essential role in the late steps of ribosome biogenesis. This chain is GTPase Der, found in Gloeobacter violaceus (strain ATCC 29082 / PCC 7421).